A 63-amino-acid chain; its full sequence is Beta-defensin 35 (63 aa).

The N-terminal stretch at 1–23 is a signal peptide; sequence MPQTFFVFCFLFFVFLQLFPGTG. 3 cysteine pairs are disulfide-bonded: cysteine 31–cysteine 58, cysteine 38–cysteine 52, and cysteine 42–cysteine 59.

It belongs to the beta-defensin family. As to expression, expressed in testis, epididymis (caput, corpus and cauda), kidney and neonatal and adult brain.

It localises to the secreted. Has antibacterial activity. The chain is Beta-defensin 35 (Defb35) from Mus musculus (Mouse).